The primary structure comprises 173 residues: Large ribosomal subunit protein bL12m (173 aa).

A mitochondrion-targeting transit peptide spans 1-33; that stretch reads MFRIASRQTRNLRALSSSKNWARSLVNTRSFRA.

It belongs to the bacterial ribosomal protein bL12 family. Component of the mitochondrial large ribosomal subunit (mt-LSU). Mature yeast 74S mitochondrial ribosomes consist of a small (37S) and a large (54S) subunit. The 37S small subunit contains a 15S ribosomal RNA (15S mt-rRNA) and at least 32 different proteins. The 54S large subunit contains a 21S rRNA (21S mt-rRNA) and at least 45 different proteins.

It is found in the mitochondrion. Component of the mitochondrial ribosome (mitoribosome), a dedicated translation machinery responsible for the synthesis of mitochondrial genome-encoded proteins, including at least some of the essential transmembrane subunits of the mitochondrial respiratory chain. The mitoribosomes are attached to the mitochondrial inner membrane and translation products are cotranslationally integrated into the membrane. The polypeptide is Large ribosomal subunit protein bL12m (mrpl12) (Schizosaccharomyces pombe (strain 972 / ATCC 24843) (Fission yeast)).